A 209-amino-acid polypeptide reads, in one-letter code: 3-demethoxyubiquinol 3-hydroxylase (209 aa).

The Fe cation site is built by E58, E88, H91, E140, E172, and H175.

Belongs to the COQ7 family. Fe cation serves as cofactor.

It is found in the cell membrane. It catalyses the reaction a 5-methoxy-2-methyl-3-(all-trans-polyprenyl)benzene-1,4-diol + AH2 + O2 = a 3-demethylubiquinol + A + H2O. It functions in the pathway cofactor biosynthesis; ubiquinone biosynthesis. Functionally, catalyzes the hydroxylation of 2-nonaprenyl-3-methyl-6-methoxy-1,4-benzoquinol during ubiquinone biosynthesis. This Polaromonas sp. (strain JS666 / ATCC BAA-500) protein is 3-demethoxyubiquinol 3-hydroxylase.